The following is a 329-amino-acid chain: GTP 3',8-cyclase (329 aa).

The 227-residue stretch at 8–234 (AFARKFYYLR…QLRQRSDGPA (227 aa)) folds into the Radical SAM core domain. Residue Arg-17 coordinates GTP. Residues Cys-24 and Cys-28 each contribute to the [4Fe-4S] cluster site. Residue Tyr-30 coordinates S-adenosyl-L-methionine. Cys-31 contributes to the [4Fe-4S] cluster binding site. Arg-68 serves as a coordination point for GTP. Gly-72 lines the S-adenosyl-L-methionine pocket. Position 99 (Thr-99) interacts with GTP. Ser-123 contacts S-adenosyl-L-methionine. Lys-160 lines the GTP pocket. Met-194 lines the S-adenosyl-L-methionine pocket. [4Fe-4S] cluster-binding residues include Cys-257 and Cys-260. 262–264 (RLR) is a binding site for GTP. Cys-274 contacts [4Fe-4S] cluster.

The protein belongs to the radical SAM superfamily. MoaA family. Monomer and homodimer. The cofactor is [4Fe-4S] cluster.

It catalyses the reaction GTP + AH2 + S-adenosyl-L-methionine = (8S)-3',8-cyclo-7,8-dihydroguanosine 5'-triphosphate + 5'-deoxyadenosine + L-methionine + A + H(+). It participates in cofactor biosynthesis; molybdopterin biosynthesis. In terms of biological role, catalyzes the cyclization of GTP to (8S)-3',8-cyclo-7,8-dihydroguanosine 5'-triphosphate. The polypeptide is GTP 3',8-cyclase (Escherichia coli (strain K12 / MC4100 / BW2952)).